The following is a 301-amino-acid chain: Acetylglutamate kinase (301 aa).

Residues 68-69, arginine 90, and asparagine 195 each bind substrate; that span reads GG.

The protein belongs to the acetylglutamate kinase family. ArgB subfamily.

The protein resides in the cytoplasm. It carries out the reaction N-acetyl-L-glutamate + ATP = N-acetyl-L-glutamyl 5-phosphate + ADP. It participates in amino-acid biosynthesis; L-arginine biosynthesis; N(2)-acetyl-L-ornithine from L-glutamate: step 2/4. Its function is as follows. Catalyzes the ATP-dependent phosphorylation of N-acetyl-L-glutamate. This chain is Acetylglutamate kinase, found in Pseudomonas savastanoi pv. phaseolicola (strain 1448A / Race 6) (Pseudomonas syringae pv. phaseolicola (strain 1448A / Race 6)).